Reading from the N-terminus, the 260-residue chain is 3'-5' ssDNA/RNA exonuclease TatD (260 aa).

A divalent metal cation contacts are provided by Glu-92, His-128, and His-153.

This sequence belongs to the metallo-dependent hydrolases superfamily. TatD-type hydrolase family. TatD subfamily. Monomer. It depends on Mg(2+) as a cofactor.

It localises to the cytoplasm. Its function is as follows. 3'-5' exonuclease that prefers single-stranded DNA and RNA. May play a role in the H(2)O(2)-induced DNA damage repair. In Yersinia pseudotuberculosis serotype O:3 (strain YPIII), this protein is 3'-5' ssDNA/RNA exonuclease TatD.